We begin with the raw amino-acid sequence, 392 residues long: ESX-1 secretion-associated protein EspA (392 aa).

The interval 302 to 392 (TRQALRPRAD…GQKVLVRNVV (91 aa)) is disordered. The segment covering 334-344 (QGMGGPVGMGG) has biased composition (gly residues).

Homodimer; disulfide-linked.

Its subcellular location is the secreted. Required for secretion of EsxA (ESAT-6) and EsxB (CFP-10) and for virulence. The sequence is that of ESX-1 secretion-associated protein EspA from Mycobacterium tuberculosis (strain CDC 1551 / Oshkosh).